The chain runs to 360 residues: Mannan endo-1,4-beta-mannosidase (360 aa).

The N-terminal stretch at 1–24 (MLKKLAVCLSIVLLLLGAASPISA) is a signal peptide. One can recognise a GH26 domain in the interval 36–347 (QTTKDIMNWL…YQNSWTLNKG (312 aa)). A substrate-binding site is contributed by H129. E191 serves as the catalytic Proton donor. Residues W196 and Y266 each coordinate substrate. The active-site Nucleophile is the E290.

Belongs to the glycosyl hydrolase 26 family. In terms of assembly, homodimer.

The protein resides in the secreted. The catalysed reaction is Random hydrolysis of (1-&gt;4)-beta-D-mannosidic linkages in mannans, galactomannans and glucomannans.. In terms of biological role, involved in the degradation of glucomannan. Catalyzes the endo hydrolysis of beta-1,4-linked mannan, galactomannan and glucomannan. In Bacillus subtilis, this protein is Mannan endo-1,4-beta-mannosidase.